Consider the following 119-residue polypeptide: DNA-binding protein inhibitor ID-3 (119 aa).

One can recognise a bHLH domain in the interval 28–80; it reads RGKGPAAEEPLSLLDDMNHCYSRLRELVPGVPRGTQLSQVEILQRVIDYILDL.

As to quaternary structure, homodimer, and heterodimer with other HLH proteins. Interacts with COPS5 and COPS7A. Interacts with IFI204. Interacts with GATA4 and NKX2-5. Interacts with ANKRD2; both proteins cooperate in myoblast differentiation. Interacts with CLOCK and BMAL1.

The protein resides in the nucleus. Transcriptional regulator (lacking a basic DNA binding domain) which negatively regulates the basic helix-loop-helix (bHLH) transcription factors by forming heterodimers and inhibiting their DNA binding and transcriptional activity. Implicated in regulating a variety of cellular processes, including cellular growth, senescence, differentiation, apoptosis, angiogenesis, and neoplastic transformation. Involved in myogenesis by inhibiting skeletal muscle and cardiac myocyte differentiation and promoting muscle precursor cells proliferation. Inhibits the binding of E2A-containing protein complexes to muscle creatine kinase E-box enhancer. Regulates the circadian clock by repressing the transcriptional activator activity of the CLOCK-BMAL1 heterodimer. This is DNA-binding protein inhibitor ID-3 (ID3) from Canis lupus familiaris (Dog).